We begin with the raw amino-acid sequence, 575 residues long: Isocitrate dehydrogenase kinase/phosphatase (575 aa).

ATP is bound by residues 315–321 (APGVKGM) and Lys-336. Asp-371 is a catalytic residue.

Belongs to the AceK family.

The protein resides in the cytoplasm. It carries out the reaction L-seryl-[isocitrate dehydrogenase] + ATP = O-phospho-L-seryl-[isocitrate dehydrogenase] + ADP + H(+). In terms of biological role, bifunctional enzyme which can phosphorylate or dephosphorylate isocitrate dehydrogenase (IDH) on a specific serine residue. This is a regulatory mechanism which enables bacteria to bypass the Krebs cycle via the glyoxylate shunt in response to the source of carbon. When bacteria are grown on glucose, IDH is fully active and unphosphorylated, but when grown on acetate or ethanol, the activity of IDH declines drastically concomitant with its phosphorylation. This Yersinia enterocolitica serotype O:8 / biotype 1B (strain NCTC 13174 / 8081) protein is Isocitrate dehydrogenase kinase/phosphatase.